The following is a 125-amino-acid chain: Fatty acid-binding protein, liver-type (125 aa).

Belongs to the calycin superfamily. Fatty-acid binding protein (FABP) family.

The protein localises to the cytoplasm. The protein is Fatty acid-binding protein, liver-type (fabp1) of Takifugu rubripes (Japanese pufferfish).